The primary structure comprises 2496 residues: Non-reducing polyketide synthase adrD (2496 aa).

Residues 15 to 254 (LVFGPQIAEI…HHASHITAVQ (240 aa)) form an N-terminal acylcarrier protein transacylase domain (SAT) region. The Ketosynthase family 3 (KS3) domain occupies 387 to 808 (ATPIAITGMG…GSNAALVVKQ (422 aa)). Residues Cys-552, His-687, and His-726 each act as for beta-ketoacyl synthase activity in the active site. A malonyl-CoA:ACP transacylase (MAT) domain region spans residues 914-1223 (LCFGGQNGNE…QSLDLGGPQG (310 aa)). The active-site For acyl/malonyl transferase activity is Ser-1001. Residues 1295–1423 (KEFVQLLTKQ…GEISLHPFGQ (129 aa)) form an N-terminal hotdog fold region. The region spanning 1295–1602 (KEFVQLLTKQ…FTSVSIAGLA (308 aa)) is the PKS/mFAS DH domain. The interval 1296 to 1601 (EFVQLLTKQP…EFTSVSIAGL (306 aa)) is product template (PT) domain. The active-site Proton acceptor; for dehydratase activity is His-1326. Residues 1451-1602 (ESSGLKGFAV…FTSVSIAGLA (152 aa)) are C-terminal hotdog fold. The active-site Proton donor; for dehydratase activity is the Asp-1509. Residues 1615 to 1629 (EKASPDLSLRNDSKV) show a composition bias toward basic and acidic residues. The segment at 1615–1645 (EKASPDLSLRNDSKVDVNPTPQNTAPVVQPT) is disordered. Residues 1633–1645 (PTPQNTAPVVQPT) are compositionally biased toward polar residues. Positions 1652-1726 (PGYFVVVQEM…ALVQTIFPDA (75 aa)) constitute a Carrier domain. Ser-1686 is subject to O-(pantetheine 4'-phosphoryl)serine. The interval 1888–2121 (QHRSEHHLLK…GFQWVDWTHN (234 aa)) is methyltransferase (CMeT) domain. Residues 2151–2496 (RVMNEETVPY…YEFLRDHVRY (346 aa)) are thioesterase (TE) domain. Catalysis depends on for thioesterase activity residues Ser-2274 and Asp-2433.

The catalysed reaction is 3 malonyl-CoA + acetyl-CoA + 2 S-adenosyl-L-methionine = 3,5-dimethylorsellinate + 2 S-adenosyl-L-homocysteine + 3 CO2 + 4 CoA. It functions in the pathway secondary metabolite biosynthesis; terpenoid biosynthesis. Non-reducing polyketide synthase; part of the gene cluster that mediates the biosynthesis of andrastins, meroterpenoid compounds that exhibit inhibitory activity against ras farnesyltransferase, suggesting that they could be promising leads for antitumor agents. The first step of the pathway is the synthesis of 3,5-dimethylorsellinic acid (DMOA) by the polyketide synthase adrD via condensation of one acetyl-CoA starter unit with 3 malonyl-CoA units and 2 methylations. DMAO is then converted to farnesyl-DMAO by the prenyltransferase adrG. The methyltransferase adrK catalyzes the methylation of the carboxyl group of farnesyl-DMAO to farnesyl-DMAO methyl ester which is further converted to epoxyfarnesyl-DMAO methyl ester by the FAD-dependent monooxygenase adrH. The terpene cyclase adrI then catalyzes the carbon skeletal rearrangement to generate the andrastin E, the first compound in the pathway having the andrastin scaffold, with the tetracyclic ring system. The post-cyclization tailoring enzymes adrF, adrE, adrJ, and adrA, are involved in the conversion of andrastin E into andrastin A. The short chain dehydrogenase adrF is responsible for the oxidation of the C-3 a hydroxyl group of andrastin E to yield the corresponding ketone, andrastin D. The ketoreductase adrE stereoselectively reduces the carbonyl moiety to reverse the stereochemistry of the C-3 position to yield andrastin F. The acetyltransferase adrJ is the acetyltransferase that attaches the acetyl group to the C-3 hydroxyl group of andrastin F to yield andrastin C. Finally, the cytochrome P450 monooxygenase adrA catalyzes two sequential oxidation reactions of the C-23 methyl group, to generate the corresponding alcohol andrastin B, and aldehyde andrastin A. This chain is Non-reducing polyketide synthase adrD, found in Penicillium rubens (strain ATCC 28089 / DSM 1075 / NRRL 1951 / Wisconsin 54-1255) (Penicillium chrysogenum).